Here is a 645-residue protein sequence, read N- to C-terminus: Threonine--tRNA ligase (645 aa).

In terms of domain architecture, TGS spans 1–62 (MSIHITFPDG…VEDGSLEIVT (62 aa)). The catalytic stretch occupies residues 242–541 (DHRKLGKELD…LTEVYKGAFP (300 aa)). Zn(2+)-binding residues include Cys-336, His-387, and His-518.

It belongs to the class-II aminoacyl-tRNA synthetase family. As to quaternary structure, homodimer. Requires Zn(2+) as cofactor.

The protein resides in the cytoplasm. It carries out the reaction tRNA(Thr) + L-threonine + ATP = L-threonyl-tRNA(Thr) + AMP + diphosphate + H(+). Functionally, catalyzes the attachment of threonine to tRNA(Thr) in a two-step reaction: L-threonine is first activated by ATP to form Thr-AMP and then transferred to the acceptor end of tRNA(Thr). Also edits incorrectly charged L-seryl-tRNA(Thr). This chain is Threonine--tRNA ligase, found in Enterococcus faecalis (strain ATCC 700802 / V583).